The sequence spans 576 residues: High-affinity choline transporter 1 (576 aa).

A helical transmembrane segment spans residues 6-26 (GIVAIVFFYVLILVVGIWAGR). Residues 27-51 (KSKSSKELESEAGAATEEVMLAGRN) lie on the Cytoplasmic side of the membrane. Residues 52–72 (IGTLVGIFTMTATWVGGAYIN) form a helical membrane-spanning segment. Topologically, residues 73–82 (GTAEALYNGG) are extracellular. A helical membrane pass occupies residues 83–103 (LLGCQAPVGYAISLVMGGLLF). The Cytoplasmic portion of the chain corresponds to 104–126 (AKKMREEGYITMLDPFQHKYGQR). A helical membrane pass occupies residues 127–147 (IGGLMYVPALLGETFWTAAIL). Over 148-165 (SALGATLSVILGIDMNAS) the chain is Extracellular. Residues 166-186 (VTLSACIAVFYTFTGGYYAVA) form a helical membrane-spanning segment. At 187-192 (YTDVVQ) the chain is on the cytoplasmic side. A helical membrane pass occupies residues 193 to 213 (LFCIFVGLWVCVPAAMVHDGA). Residues 214–233 (KDISRNAGDWIGEIGGFKET) lie on the Extracellular side of the membrane. A helical transmembrane segment spans residues 234-254 (SLWIDCMLLLVFGGIPWQVYF). Topologically, residues 255–270 (QRVLSSKTAHGAQTLS) are cytoplasmic. A helical transmembrane segment spans residues 271-291 (FVAGVGCILMAIPPALIGAIA). Over 292–319 (RNTDWRMTDYSPWNNGTKVESIPPDKRN) the chain is Extracellular. Residue N306 is glycosylated (N-linked (GlcNAc...) asparagine). The chain crosses the membrane as a helical span at residues 320 to 340 (MVVPLVFQYLTPRWVAFIGLG). Topologically, residues 341-378 (AVSAAVMSSADSSVLSAASMFAHNIWKLTIRPHASEKE) are cytoplasmic. Residues 379 to 399 (VIIVMRIAIICVGIMATIMAL) traverse the membrane as a helical segment. Topologically, residues 400–408 (TIQSIYGLW) are extracellular. A helical membrane pass occupies residues 409–429 (YLCADLVYVILFPQLLCVVYM). Residues 430 to 437 (PRSNTYGS) are Cytoplasmic-facing. A helical membrane pass occupies residues 438 to 458 (LAGYAVGLVLRLIGGEPLVSL). Over 459–478 (PAFFHYPMYTDGVQYFPFRT) the chain is Extracellular. Residues 479 to 499 (TAMLSSMATIYIVSIQSEKLF) traverse the membrane as a helical segment. At 500-576 (KSGRLSPEWD…DQSYYSTNSN (77 aa)) the chain is on the cytoplasmic side. The segment at 541–576 (APNGTPAPVHPNQQPSDENTLLHPYSDQSYYSTNSN) is disordered. A compositionally biased stretch (polar residues) spans 566–576 (SDQSYYSTNSN).

It belongs to the sodium:solute symporter (SSF) (TC 2.A.21) family. In terms of tissue distribution, detected in the nervous system, including the nerve ring and cholinergic motor neurons of the ventral nerve cord.

It localises to the membrane. Functionally, imports choline from the extracellular space to the neuron with high affinity. Choline uptake is the rate-limiting step in acetylcholine synthesis. Sodium ion and chloride ion dependent. This Caenorhabditis elegans protein is High-affinity choline transporter 1 (cho-1).